The following is a 350-amino-acid chain: Nicotinate-nucleotide--dimethylbenzimidazole phosphoribosyltransferase (350 aa).

Residue glutamate 317 is the Proton acceptor of the active site.

Belongs to the CobT family.

It carries out the reaction 5,6-dimethylbenzimidazole + nicotinate beta-D-ribonucleotide = alpha-ribazole 5'-phosphate + nicotinate + H(+). The protein operates within nucleoside biosynthesis; alpha-ribazole biosynthesis; alpha-ribazole from 5,6-dimethylbenzimidazole: step 1/2. Its function is as follows. Catalyzes the synthesis of alpha-ribazole-5'-phosphate from nicotinate mononucleotide (NAMN) and 5,6-dimethylbenzimidazole (DMB). In Shewanella putrefaciens (strain CN-32 / ATCC BAA-453), this protein is Nicotinate-nucleotide--dimethylbenzimidazole phosphoribosyltransferase.